Reading from the N-terminus, the 234-residue chain is Peroxiredoxin (234 aa).

In terms of domain architecture, Thioredoxin spans 6-161 (PLIGEKLPEM…ILRLLKALQV (156 aa)). The Cysteine sulfenic acid (-SOH) intermediate role is filled by Cys-48. Arg-124 is a binding site for substrate. Cys-203 and Cys-209 form a disulfide bridge.

The protein belongs to the peroxiredoxin family. Prx6 subfamily. In terms of assembly, homodecamer. Pentamer of dimers that assemble into a ring structure.

The protein resides in the cytoplasm. It catalyses the reaction a hydroperoxide + [thioredoxin]-dithiol = an alcohol + [thioredoxin]-disulfide + H2O. In terms of biological role, thiol-specific peroxidase that catalyzes the reduction of hydrogen peroxide and organic hydroperoxides to water and alcohols, respectively. Plays a role in cell protection against oxidative stress by detoxifying peroxides. The sequence is that of Peroxiredoxin from Ignicoccus hospitalis (strain KIN4/I / DSM 18386 / JCM 14125).